The chain runs to 372 residues: Glutamate 5-kinase (372 aa).

Lys-14 contacts ATP. Ser-54, Asp-141, and Asn-153 together coordinate substrate. Residues 173–174 and 215–221 contribute to the ATP site; these read TD and TGGMITK. The 79-residue stretch at 280–358 folds into the PUA domain; it reads AGRLLLDDGA…REIEAALGYI (79 aa).

This sequence belongs to the glutamate 5-kinase family.

It is found in the cytoplasm. It carries out the reaction L-glutamate + ATP = L-glutamyl 5-phosphate + ADP. The protein operates within amino-acid biosynthesis; L-proline biosynthesis; L-glutamate 5-semialdehyde from L-glutamate: step 1/2. Its function is as follows. Catalyzes the transfer of a phosphate group to glutamate to form L-glutamate 5-phosphate. This is Glutamate 5-kinase from Chromobacterium violaceum (strain ATCC 12472 / DSM 30191 / JCM 1249 / CCUG 213 / NBRC 12614 / NCIMB 9131 / NCTC 9757 / MK).